A 73-amino-acid chain; its full sequence is Disintegrin cerastin (73 aa).

One can recognise a Disintegrin domain in the interval 1–73; sequence EAGEECDCGT…ADCPRNGLYG (73 aa). Disulfide bonds link cysteine 6-cysteine 21, cysteine 8-cysteine 16, cysteine 15-cysteine 38, cysteine 29-cysteine 35, cysteine 34-cysteine 59, and cysteine 47-cysteine 66. A Cell attachment site motif is present at residues 51-53; sequence RGD.

The protein belongs to the venom metalloproteinase (M12B) family. P-II subfamily. P-IIa sub-subfamily. Monomer (disintegrin). In terms of tissue distribution, expressed by the venom gland.

Its subcellular location is the secreted. In terms of biological role, inhibits fibrinogen interaction with platelets. Acts by binding to alpha-IIb/beta-3 (ITGA2B/ITGB3) on the platelet surface and inhibits aggregation induced by ADP, thrombin, platelet-activating factor and collagen. The polypeptide is Disintegrin cerastin (Crotalus cerastes cerastes (Mojave desert sidewinder)).